A 1888-amino-acid polypeptide reads, in one-letter code: E3 ubiquitin-protein ligase UPL3 (1888 aa).

Over residues 1 to 10 (METRSRKRAE) the composition is skewed to basic and acidic residues. A disordered region spans residues 1 to 157 (METRSRKRAE…NGGFMHPNMS (157 aa)). A compositionally biased stretch (low complexity) spans 41–81 (LSSSSSSSLAPTPPSSSTTTRSRSSRSAAAAAPMDTSTDSS). Residues 97–124 (NSDKGKEKEHDVRIRERERERDRAREQL) show a composition bias toward basic and acidic residues. The segment covering 137-146 (DEDDDNDSED) has biased composition (acidic residues). ARM repeat units lie at residues 227–267 (EDSL…HLCD), 270–310 (PSSC…KISQ), 312–349 (HPTA…NMCK), and 351–390 (LPSD…RIAE). Disordered stretches follow at residues 660–711 (KPSH…IGAN), 970–1119 (ALKP…LPMC), 1134–1157 (DDDG…GAAA), and 1280–1307 (RLSV…VESQ). Residues 986-1002 (PSGAGVSSPSSSTPAST) are compositionally biased toward low complexity. A compositionally biased stretch (basic and acidic residues) spans 1019–1029 (TSKKDPVHEKG). Residues 1076–1113 (SSEDEELEISPVDIDDALVIEEDDISDDEDDDNEDVLD) show a composition bias toward acidic residues. Low complexity-rich tracts occupy residues 1148-1157 (ASGGTSGAAA) and 1286-1303 (ASST…TNSS). A K-box region spans residues 1377-1451 (AKVPLDEFVN…ALNRLQQQQG (75 aa)). Residues 1490–1888 (MYSSQKAVLE…NEGQGSFDLS (399 aa)) form the HECT domain. Cysteine 1855 functions as the Glycyl thioester intermediate in the catalytic mechanism.

The protein belongs to the UPL family. K-HECT subfamily. In terms of tissue distribution, widely expressed.

The enzyme catalyses S-ubiquitinyl-[E2 ubiquitin-conjugating enzyme]-L-cysteine + [acceptor protein]-L-lysine = [E2 ubiquitin-conjugating enzyme]-L-cysteine + N(6)-ubiquitinyl-[acceptor protein]-L-lysine.. Its pathway is protein modification; protein ubiquitination. Functionally, probable E3 ubiquitin-protein ligase which mediates ubiquitination and subsequent proteasomal degradation of target proteins. Involved in the repression of endoreduplication process and the cell morphogenesis in the trichomes. The chain is E3 ubiquitin-protein ligase UPL3 (UPL3) from Arabidopsis thaliana (Mouse-ear cress).